Consider the following 266-residue polypeptide: MNQCYFLSSFLSPQQPESPPLYSFQEINDLLALNFTDKDWQSYVILRRFFDLENFAFFWAGKSIPFSFGTITNSNVESLLRLQMWSDEWEFEDFFKDFLLRYKTPQERLTHFSELVRDFLDHYQDYPSEFLRTYFRFKQDLRIILAGFRARVMQKDVSFVLRDEDSSNPIVLHVLMQKDSPNYELPDEFFELRDVLGDYGRLPHMLNQTLSFYEFHKVEEMSRDKYLNTDAILSRLTTYLMAIRSSWASVQKGKELINLMEKGIRW.

Belongs to the chlamydial CPn_0087/CT_309/TC_0583 family.

This is an uncharacterized protein from Chlamydia trachomatis serovar D (strain ATCC VR-885 / DSM 19411 / UW-3/Cx).